Reading from the N-terminus, the 240-residue chain is Ribonuclease HII (240 aa).

Residues G33–T222 form the RNase H type-2 domain. The a divalent metal cation site is built by D39, E40, and D131.

It belongs to the RNase HII family. Mn(2+) is required as a cofactor. It depends on Mg(2+) as a cofactor.

The protein resides in the cytoplasm. The enzyme catalyses Endonucleolytic cleavage to 5'-phosphomonoester.. Its function is as follows. Endonuclease that specifically degrades the RNA of RNA-DNA hybrids. This chain is Ribonuclease HII, found in Mycobacterium leprae (strain Br4923).